The chain runs to 116 residues: Small ribosomal subunit protein bS16 (116 aa).

The interval 88 to 116 (RNNPKAAVPGKRMAELAKKKADRAAASAE) is disordered. Residues 99–110 (RMAELAKKKADR) show a composition bias toward basic and acidic residues.

It belongs to the bacterial ribosomal protein bS16 family.

The protein is Small ribosomal subunit protein bS16 of Cereibacter sphaeroides (strain ATCC 17029 / ATH 2.4.9) (Rhodobacter sphaeroides).